We begin with the raw amino-acid sequence, 502 residues long: Maturase K (502 aa).

Belongs to the intron maturase 2 family. MatK subfamily.

The protein localises to the plastid. The protein resides in the chloroplast. Usually encoded in the trnK tRNA gene intron. Probably assists in splicing its own and other chloroplast group II introns. This chain is Maturase K, found in Tilia americana (American basswood).